We begin with the raw amino-acid sequence, 530 residues long: Ubiquitin carboxyl-terminal hydrolase 17-like protein 10 (530 aa).

A USP domain is found at 80–375 (AGLQNMGNTC…QAYVLFYIQK (296 aa)). The active-site Nucleophile is the Cys89. Catalysis depends on His334, which acts as the Proton acceptor. Basic and acidic residues-rich tracts occupy residues 382 to 392 (SESVSRGREPR) and 398 to 410 (DTDR…ELKR). 2 disordered regions span residues 382-410 (SESV…ELKR) and 477-530 (NHHP…LVCQ). The span at 484–495 (SSLLNLSSTTPT) shows a compositional bias: low complexity. A compositionally biased stretch (polar residues) spans 496–505 (DQESMNTGTL). Residues 510 to 524 (GRTRRSKGKNKHSKR) show a composition bias toward basic residues.

It belongs to the peptidase C19 family. USP17 subfamily.

The protein resides in the nucleus. It is found in the endoplasmic reticulum. The enzyme catalyses Thiol-dependent hydrolysis of ester, thioester, amide, peptide and isopeptide bonds formed by the C-terminal Gly of ubiquitin (a 76-residue protein attached to proteins as an intracellular targeting signal).. Its function is as follows. Deubiquitinating enzyme that removes conjugated ubiquitin from specific proteins to regulate different cellular processes that may include cell proliferation, progression through the cell cycle, apoptosis, cell migration, and the cellular response to viral infection. This Homo sapiens (Human) protein is Ubiquitin carboxyl-terminal hydrolase 17-like protein 10 (USP17L10).